Here is a 196-residue protein sequence, read N- to C-terminus: Imidazole glycerol phosphate synthase subunit HisH (196 aa).

The region spanning 2–196 (KVAVIKYNAG…ERIIKNFLEL (195 aa)) is the Glutamine amidotransferase type-1 domain. The active-site Nucleophile is the Cys-77. Residues His-178 and Glu-180 contribute to the active site.

As to quaternary structure, heterodimer of HisH and HisF.

It localises to the cytoplasm. It catalyses the reaction 5-[(5-phospho-1-deoxy-D-ribulos-1-ylimino)methylamino]-1-(5-phospho-beta-D-ribosyl)imidazole-4-carboxamide + L-glutamine = D-erythro-1-(imidazol-4-yl)glycerol 3-phosphate + 5-amino-1-(5-phospho-beta-D-ribosyl)imidazole-4-carboxamide + L-glutamate + H(+). The catalysed reaction is L-glutamine + H2O = L-glutamate + NH4(+). It participates in amino-acid biosynthesis; L-histidine biosynthesis; L-histidine from 5-phospho-alpha-D-ribose 1-diphosphate: step 5/9. Functionally, IGPS catalyzes the conversion of PRFAR and glutamine to IGP, AICAR and glutamate. The HisH subunit catalyzes the hydrolysis of glutamine to glutamate and ammonia as part of the synthesis of IGP and AICAR. The resulting ammonia molecule is channeled to the active site of HisF. This Bacteroides fragilis (strain YCH46) protein is Imidazole glycerol phosphate synthase subunit HisH.